Here is a 729-residue protein sequence, read N- to C-terminus: Fatty acid oxidation complex subunit alpha (729 aa).

The interval 1-189 (MLYKGDTLYL…KIGLVDGVVK (189 aa)) is enoyl-CoA hydratase/isomerase. Aspartate 296 contacts substrate. The interval 311–729 (ETPKQAAVLG…ARPVGDLKTA (419 aa)) is 3-hydroxyacyl-CoA dehydrogenase. NAD(+)-binding positions include methionine 324, aspartate 343, 400-402 (VVE), lysine 407, and serine 429. The active-site For 3-hydroxyacyl-CoA dehydrogenase activity is histidine 450. Residue asparagine 453 participates in NAD(+) binding. Asparagine 500 and tyrosine 660 together coordinate substrate. A disordered region spans residues 708–729 (RHNEPYYPPVEPARPVGDLKTA).

It in the N-terminal section; belongs to the enoyl-CoA hydratase/isomerase family. This sequence in the C-terminal section; belongs to the 3-hydroxyacyl-CoA dehydrogenase family. As to quaternary structure, heterotetramer of two alpha chains (FadB) and two beta chains (FadA).

The catalysed reaction is a (3S)-3-hydroxyacyl-CoA + NAD(+) = a 3-oxoacyl-CoA + NADH + H(+). The enzyme catalyses a (3S)-3-hydroxyacyl-CoA = a (2E)-enoyl-CoA + H2O. It carries out the reaction a 4-saturated-(3S)-3-hydroxyacyl-CoA = a (3E)-enoyl-CoA + H2O. It catalyses the reaction (3S)-3-hydroxybutanoyl-CoA = (3R)-3-hydroxybutanoyl-CoA. The catalysed reaction is a (3Z)-enoyl-CoA = a 4-saturated (2E)-enoyl-CoA. The enzyme catalyses a (3E)-enoyl-CoA = a 4-saturated (2E)-enoyl-CoA. Its pathway is lipid metabolism; fatty acid beta-oxidation. Involved in the aerobic and anaerobic degradation of long-chain fatty acids via beta-oxidation cycle. Catalyzes the formation of 3-oxoacyl-CoA from enoyl-CoA via L-3-hydroxyacyl-CoA. It can also use D-3-hydroxyacyl-CoA and cis-3-enoyl-CoA as substrate. This Escherichia coli O17:K52:H18 (strain UMN026 / ExPEC) protein is Fatty acid oxidation complex subunit alpha.